A 138-amino-acid chain; its full sequence is Transcription antitermination protein NusB (138 aa).

This sequence belongs to the NusB family.

Its function is as follows. Involved in transcription antitermination. Required for transcription of ribosomal RNA (rRNA) genes. Binds specifically to the boxA antiterminator sequence of the ribosomal RNA (rrn) operons. This is Transcription antitermination protein NusB from Photorhabdus laumondii subsp. laumondii (strain DSM 15139 / CIP 105565 / TT01) (Photorhabdus luminescens subsp. laumondii).